Here is a 263-residue protein sequence, read N- to C-terminus: Glutamate racemase (263 aa).

Substrate is bound by residues 12–13 and 44–45; these read DS and YG. Catalysis depends on Cys-75, which acts as the Proton donor/acceptor. 76-77 lines the substrate pocket; that stretch reads NT. Cys-186 acts as the Proton donor/acceptor in catalysis. 187–188 provides a ligand contact to substrate; it reads TH.

It belongs to the aspartate/glutamate racemases family.

The enzyme catalyses L-glutamate = D-glutamate. It participates in cell wall biogenesis; peptidoglycan biosynthesis. Functionally, provides the (R)-glutamate required for cell wall biosynthesis. In Ectopseudomonas mendocina (strain ymp) (Pseudomonas mendocina), this protein is Glutamate racemase.